The following is a 348-amino-acid chain: Phospho-2-dehydro-3-deoxyheptonate aldolase, Trp-sensitive (348 aa).

The protein belongs to the class-I DAHP synthase family.

It catalyses the reaction D-erythrose 4-phosphate + phosphoenolpyruvate + H2O = 7-phospho-2-dehydro-3-deoxy-D-arabino-heptonate + phosphate. It functions in the pathway metabolic intermediate biosynthesis; chorismate biosynthesis; chorismate from D-erythrose 4-phosphate and phosphoenolpyruvate: step 1/7. Its function is as follows. Stereospecific condensation of phosphoenolpyruvate (PEP) and D-erythrose-4-phosphate (E4P) giving rise to 3-deoxy-D-arabino-heptulosonate-7-phosphate (DAHP). This is Phospho-2-dehydro-3-deoxyheptonate aldolase, Trp-sensitive (aroH) from Escherichia coli O157:H7.